The following is a 41-amino-acid chain: Competence-stimulating peptide type 2 (41 aa).

A propeptide spanning residues 1-24 is cleaved from the precursor; the sequence is MKNTVKLEQFVALKEKDLQKIKGG.

The protein belongs to the ComC family.

Its subcellular location is the secreted. In terms of biological role, acts as a pheromone, induces cells to develop competence for genetic transformation. This Streptococcus pneumoniae serotype 4 (strain ATCC BAA-334 / TIGR4) protein is Competence-stimulating peptide type 2 (comC2).